The primary structure comprises 20 residues: Alpha-conotoxin-like ts14a (20 aa).

2 disulfide bridges follow: C3–C16 and C14–C20.

As to expression, expressed by the venom duct.

The protein localises to the secreted. In terms of biological role, alpha-conotoxins act on postsynaptic membranes, they bind to the nicotinic acetylcholine receptors (nAChR) and thus inhibit them. This is Alpha-conotoxin-like ts14a from Conus tessulatus (Tessellate cone).